The primary structure comprises 351 residues: Histidine protein kinase SaeS (351 aa).

Helical transmembrane passes span 9–29 (IIIG…IAYI) and 40–60 (TLTL…SIFI). An HAMP domain is found at 61 to 114 (NPLIQKIKQFNIKTKQFANGNYASNDKTFNSPKEIYELNQSFNKMASEITQQMN). One can recognise a Histidine kinase domain in the interval 129–348 (NLAHDLKTPL…TMTVTLHKLD (220 aa)). The residue at position 132 (His-132) is a Phosphohistidine; by autocatalysis.

In terms of processing, autophosphorylated.

It localises to the cell membrane. It carries out the reaction ATP + protein L-histidine = ADP + protein N-phospho-L-histidine.. Its function is as follows. Member of the two-component regulatory system SaeR/SaeS involved in the regulation of staphylococcal virulence factors in a strain-dependent fashion. Probably functions as a membrane-associated protein kinase that upon sensing the appropriate signal, autophosphorylates and in turn activates the cytosolic response regulator SaeR. The polypeptide is Histidine protein kinase SaeS (saeS) (Staphylococcus aureus (strain USA300)).